Reading from the N-terminus, the 415-residue chain is Gamma-glutamyl phosphate reductase (415 aa).

This sequence belongs to the gamma-glutamyl phosphate reductase family.

It is found in the cytoplasm. It catalyses the reaction L-glutamate 5-semialdehyde + phosphate + NADP(+) = L-glutamyl 5-phosphate + NADPH + H(+). Its pathway is amino-acid biosynthesis; L-proline biosynthesis; L-glutamate 5-semialdehyde from L-glutamate: step 2/2. In terms of biological role, catalyzes the NADPH-dependent reduction of L-glutamate 5-phosphate into L-glutamate 5-semialdehyde and phosphate. The product spontaneously undergoes cyclization to form 1-pyrroline-5-carboxylate. The protein is Gamma-glutamyl phosphate reductase of Cutibacterium acnes (strain DSM 16379 / KPA171202) (Propionibacterium acnes).